Consider the following 188-residue polypeptide: UPF0200 protein M164_1169 (188 aa).

Residue glycine 15–serine 22 coordinates ATP.

The protein belongs to the UPF0200 family.

The polypeptide is UPF0200 protein M164_1169 (Saccharolobus islandicus (strain M.16.4 / Kamchatka #3) (Sulfolobus islandicus)).